The sequence spans 495 residues: UDP-N-acetylmuramoyl-L-alanyl-D-glutamate--2,6-diaminopimelate ligase (495 aa).

UDP-N-acetyl-alpha-D-muramoyl-L-alanyl-D-glutamate is bound by residues Leu-27, Ser-29, and 44–46; that span reads HQA. Residue 116 to 122 coordinates ATP; the sequence is GTNGKTT. UDP-N-acetyl-alpha-D-muramoyl-L-alanyl-D-glutamate is bound by residues Asn-157, 158–159, Ser-185, Gln-191, and Arg-193; that span reads TT. Position 225 is an N6-carboxylysine (Lys-225). Meso-2,6-diaminopimelate-binding positions include Arg-390, 414–417, Gly-465, and Glu-469; that span reads DNPR. The Meso-diaminopimelate recognition motif motif lies at 414-417; the sequence is DNPR.

The protein belongs to the MurCDEF family. MurE subfamily. Mg(2+) is required as a cofactor. Carboxylation is probably crucial for Mg(2+) binding and, consequently, for the gamma-phosphate positioning of ATP.

The protein localises to the cytoplasm. It catalyses the reaction UDP-N-acetyl-alpha-D-muramoyl-L-alanyl-D-glutamate + meso-2,6-diaminopimelate + ATP = UDP-N-acetyl-alpha-D-muramoyl-L-alanyl-gamma-D-glutamyl-meso-2,6-diaminopimelate + ADP + phosphate + H(+). The protein operates within cell wall biogenesis; peptidoglycan biosynthesis. Functionally, catalyzes the addition of meso-diaminopimelic acid to the nucleotide precursor UDP-N-acetylmuramoyl-L-alanyl-D-glutamate (UMAG) in the biosynthesis of bacterial cell-wall peptidoglycan. This chain is UDP-N-acetylmuramoyl-L-alanyl-D-glutamate--2,6-diaminopimelate ligase, found in Salmonella typhimurium (strain LT2 / SGSC1412 / ATCC 700720).